A 1024-amino-acid chain; its full sequence is Seizure 6-like protein (1024 aa).

The N-terminal stretch at Met-1 to Ala-28 is a signal peptide. The Extracellular segment spans residues Leu-29–Ala-958. 3 disordered regions span residues Ala-33 to Ala-77, Arg-108 to Leu-184, and Ala-212 to Gln-234. Residue Ser-49 is glycosylated (O-linked (GalNAc...) serine). Residues Ser-56–Val-66 show a composition bias toward basic and acidic residues. Residues Lys-110–Pro-120 show a composition bias toward basic residues. The span at Ser-138–Glu-162 shows a compositional bias: polar residues. O-glycosylated at one site stretches follow at residues Ser-147–Thr-161 and Ser-176–Ser-180. Residues Cys-281 and Cys-308 are joined by a disulfide bond. The 109-residue stretch at Cys-281–Phe-389 folds into the CUB 1 domain. Residues Asn-311, Asn-328, and Asn-350 are each glycosylated (N-linked (GlcNAc...) asparagine). One can recognise a Sushi 1 domain in the interval Leu-391 to Ala-450. Disulfide bonds link Cys-393-Cys-433 and Cys-419-Cys-448. Asn-435, Asn-458, Asn-474, Asn-514, Asn-576, Asn-618, Asn-674, and Asn-742 each carry an N-linked (GlcNAc...) asparagine glycan. The region spanning Cys-452–Phe-562 is the CUB 2 domain. The Sushi 2 domain occupies Gly-565 to Ala-626. Cystine bridges form between Cys-567–Cys-609 and Cys-594–Cys-624. The region spanning Cys-628–Val-739 is the CUB 3 domain. 3 Sushi domains span residues Asp-743–Lys-802, Met-804–Ser-867, and Leu-871–Val-932. Disulfide bonds link Cys-745–Cys-787, Cys-773–Cys-800, Cys-806–Cys-848, Cys-834–Cys-865, Cys-873–Cys-915, and Cys-901–Cys-930. A helical transmembrane segment spans residues Leu-959–Ile-979. Over Thr-980–Ile-1024 the chain is Cytoplasmic.

The protein belongs to the SEZ6 family. In terms of processing, O-glycosylated. Widely expressed, including adult and fetal brains and lungs. Not expressed in all lung cancer cell lines.

Its subcellular location is the endoplasmic reticulum membrane. Functionally, may contribute to specialized endoplasmic reticulum functions in neurons. The protein is Seizure 6-like protein (SEZ6L) of Homo sapiens (Human).